The following is a 290-amino-acid chain: MGTPEFPNLGKHCSVGDCNQIDFLPFTCDRCDHVFCLQHRSYTSHQCPNANQKDVTVLICPLCAKGVRLNPNEDPNITWDTHVNSDCDPSNYQKVTKKKKCPVPGCRETLTFSNTIRCKDCTKEHCLKHRFGPDHKCPGPRKPESTFPFGNMLRRSQKAESCSNSNSSSTSSSWWSSSLLTAATSFKSSAEAGMQKLSTATTQAIQKAKDGISTSSSNSGDLVEQCVQCPARFSTVGALIEHCEKSHQSNSQSSRSRVTVDVCPKCSKAFRDPVLLVEHVERDHGGTSRA.

2 AN1-type zinc fingers span residues 7-55 and 95-145; these read PNLG…QKDV and VTKK…KPES. Residues C13, C18, C28, C31, C36, H39, H45, C47, C101, C106, C118, C121, C126, H129, H135, and C137 each coordinate Zn(2+). 2 consecutive C2H2-type zinc fingers follow at residues 224-247 and 261-284; these read EQCV…EKSH and DVCP…ERDH.

Functionally, may be involved in environmental stress response. This is Zinc finger AN1 and C2H2 domain-containing stress-associated protein 16 (SAP16) from Oryza sativa subsp. japonica (Rice).